A 56-amino-acid chain; its full sequence is Small ribosomal subunit protein uS14 (56 aa).

The Zn(2+) site is built by Cys21, Cys24, Cys39, and Cys42.

This sequence belongs to the universal ribosomal protein uS14 family. As to quaternary structure, component of the 40S small ribosomal subunit. It depends on Zn(2+) as a cofactor.

It localises to the cytoplasm. The protein localises to the cytosol. It is found in the rough endoplasmic reticulum. The protein is Small ribosomal subunit protein uS14 (RpS29) of Lonomia obliqua (Moth).